A 25-amino-acid polypeptide reads, in one-letter code: Caerin-2.5 (25 aa).

As to expression, expressed by the skin parotoid and/or rostral glands.

It localises to the secreted. Its function is as follows. Antibacterial peptide, that adopts an alpha helical conformation which can disrupt bacterial membranes. Each caerin displays a different antimicrobial specificity. This Ranoidea gilleni (Centralian tree frog) protein is Caerin-2.5.